The sequence spans 185 residues: Probable E3 ubiquitin-protein ligase ATL44 (185 aa).

Residues 29-49 (VVILSALLCALICVAGLAAVV) traverse the membrane as a helical segment. The RING-type; atypical zinc finger occupies 102-144 (CAICLTDFADGEEIRVLPLCGHSFHVECIDKWLVSRSSCPSCR). Residues 163–185 (MKDQAHRHQHHQHSSTTIPTFLP) are disordered. The span at 176–185 (SSTTIPTFLP) shows a compositional bias: polar residues.

This sequence belongs to the RING-type zinc finger family. ATL subfamily. In terms of assembly, interacts with BIK1. In terms of processing, auto-monoubiquitination. As to expression, expressed in stems, flowers and green siliques.

It is found in the membrane. The enzyme catalyses S-ubiquitinyl-[E2 ubiquitin-conjugating enzyme]-L-cysteine + [acceptor protein]-L-lysine = [E2 ubiquitin-conjugating enzyme]-L-cysteine + N(6)-ubiquitinyl-[acceptor protein]-L-lysine.. It functions in the pathway protein modification; protein ubiquitination. E3 ubiquitin-protein ligase that possess E3 ubiquitin ligase activity in vitro and mediates protein monoubiquitination. Triggers the monoubiquitination of phosphorylated BIK1 in response to pathogen-associated molecular pattern (PAMP) detection. The sequence is that of Probable E3 ubiquitin-protein ligase ATL44 from Arabidopsis thaliana (Mouse-ear cress).